A 327-amino-acid chain; its full sequence is Zinc transport protein ZntB (327 aa).

Topologically, residues 1–273 (MEAIKGSDVN…ARRTYTMSLM (273 aa)) are cytoplasmic. The helical transmembrane segment at 274–294 (AMVFLPSTFLTGLFGVNLGGI) threads the bilayer. The Periplasmic segment spans residues 295 to 300 (PGGGWR). Residues 301 to 321 (FGFSLFCILLVVLIGGVTLWL) traverse the membrane as a helical segment. Over 322 to 327 (HRSKWL) the chain is Cytoplasmic.

This sequence belongs to the CorA metal ion transporter (MIT) (TC 1.A.35) family.

It is found in the cell inner membrane. It carries out the reaction Zn(2+)(out) + H(+)(out) = Zn(2+)(in) + H(+)(in). Functionally, zinc transporter. Acts as a Zn(2+):proton symporter, which likely mediates zinc ion uptake. The chain is Zinc transport protein ZntB from Salmonella agona (strain SL483).